Here is a 357-residue protein sequence, read N- to C-terminus: 3-dehydroquinate synthase (357 aa).

Residues 104–108 (GVVGD), 128–129 (TT), Lys141, and 168–171 (FLET) each bind NAD(+). The Zn(2+) site is built by Glu183, His243, and His260.

The protein belongs to the sugar phosphate cyclases superfamily. Dehydroquinate synthase family. It depends on NAD(+) as a cofactor. The cofactor is Co(2+). Requires Zn(2+) as cofactor.

The protein localises to the cytoplasm. The catalysed reaction is 7-phospho-2-dehydro-3-deoxy-D-arabino-heptonate = 3-dehydroquinate + phosphate. The protein operates within metabolic intermediate biosynthesis; chorismate biosynthesis; chorismate from D-erythrose 4-phosphate and phosphoenolpyruvate: step 2/7. In terms of biological role, catalyzes the conversion of 3-deoxy-D-arabino-heptulosonate 7-phosphate (DAHP) to dehydroquinate (DHQ). This chain is 3-dehydroquinate synthase, found in Streptococcus pyogenes serotype M18 (strain MGAS8232).